The sequence spans 812 residues: Valine--tRNA ligase (812 aa).

Residues 46-56 (PTVSGQLHIGH) carry the 'HIGH' region motif. The short motif at 536–540 (KMSKS) is the 'KMSKS' region element. Position 539 (Lys539) interacts with ATP.

The protein belongs to the class-I aminoacyl-tRNA synthetase family. ValS type 2 subfamily. Monomer.

It is found in the cytoplasm. It catalyses the reaction tRNA(Val) + L-valine + ATP = L-valyl-tRNA(Val) + AMP + diphosphate. In terms of biological role, catalyzes the attachment of valine to tRNA(Val). As ValRS can inadvertently accommodate and process structurally similar amino acids such as threonine, to avoid such errors, it has a 'posttransfer' editing activity that hydrolyzes mischarged Thr-tRNA(Val) in a tRNA-dependent manner. The sequence is that of Valine--tRNA ligase from Rickettsia bellii (strain OSU 85-389).